The sequence spans 223 residues: Neurotrophic factor BDNF precursor form (223 aa).

Positions Ser1–Ala5 are cleaved as a signal peptide. A propeptide spanning residues Ala6–Arg114 is cleaved from the precursor. Residue Asn107 is glycosylated (N-linked (GlcNAc...) asparagine). Intrachain disulfides connect Cys127-Cys194 and Cys172-Cys223.

The protein belongs to the NGF-beta family.

It localises to the secreted. In terms of biological role, promotes the survival of neuronal populations that are all located either in the central nervous system or directly connected to it. This Ramphotyphlops sp. (strain YPM 13663) (Blind snake) protein is Neurotrophic factor BDNF precursor form (BDNF).